The sequence spans 503 residues: ATP synthase subunit alpha (503 aa).

Residue 170–177 (GDRQTGKT) participates in ATP binding.

Belongs to the ATPase alpha/beta chains family. F-type ATPases have 2 components, CF(1) - the catalytic core - and CF(0) - the membrane proton channel. CF(1) has five subunits: alpha(3), beta(3), gamma(1), delta(1), epsilon(1). CF(0) has three main subunits: a(1), b(2) and c(9-12). The alpha and beta chains form an alternating ring which encloses part of the gamma chain. CF(1) is attached to CF(0) by a central stalk formed by the gamma and epsilon chains, while a peripheral stalk is formed by the delta and b chains.

It localises to the cell inner membrane. It catalyses the reaction ATP + H2O + 4 H(+)(in) = ADP + phosphate + 5 H(+)(out). Produces ATP from ADP in the presence of a proton gradient across the membrane. The alpha chain is a regulatory subunit. This chain is ATP synthase subunit alpha, found in Thermotoga maritima (strain ATCC 43589 / DSM 3109 / JCM 10099 / NBRC 100826 / MSB8).